Reading from the N-terminus, the 533-residue chain is Beta-glucosidase 24 (533 aa).

Positions M1–A26 are cleaved as a signal peptide. An a beta-D-glucoside-binding site is contributed by Q58. N64 and N88 each carry an N-linked (GlcNAc...) asparagine glycan. A beta-D-glucoside-binding positions include H161 and N206–E207. The Proton donor role is filled by E207. C226 and C239 form a disulfide bridge. Y355 serves as a coordination point for a beta-D-glucoside. A glycan (N-linked (GlcNAc...) asparagine) is linked at N388. Position 427 (E427) interacts with a beta-D-glucoside. The active-site Nucleophile is E427. 3 N-linked (GlcNAc...) asparagine glycosylation sites follow: N437, N442, and N470. Residues W477, E484–W485, and F493 each bind a beta-D-glucoside. Residue N503 is glycosylated (N-linked (GlcNAc...) asparagine). Residues K530–L533 carry the Prevents secretion from ER motif.

Belongs to the glycosyl hydrolase 1 family.

It is found in the endoplasmic reticulum lumen. It carries out the reaction Hydrolysis of terminal, non-reducing beta-D-glucosyl residues with release of beta-D-glucose.. The chain is Beta-glucosidase 24 from Arabidopsis thaliana (Mouse-ear cress).